Here is a 618-residue protein sequence, read N- to C-terminus: F-box/LRR-repeat protein At3g58940 (618 aa).

The region spanning 1–47 is the F-box domain; sequence MDRVSNLPEEVRCHILSFLPTKHAALTSVLSKSWLNLWKFETNLDID. LRR repeat units lie at residues 147–176, 196–223, 224–249, 282–313, 314–339, and 354–379; these read LKLRSEHCVNWWHWDIGASLPNLKSLNIDS, EVHMANMEWRELDETMSSASLTKLSIHG, TGVEEFEHPKSISIDTPNLLYLNYSD, TLYLTEDTLEVLTMCCESMPVFNNLKTLGLKS, DEGRGWQAVPALLRNCPHLEFLIIEG, and CISREDKGRSLISCPVKKLEVRGFRG. The tract at residues 587 to 618 is disordered; the sequence is ATDSERAETSSNQEMTELGQATATYFPPREGE. Residues 595 to 609 show a composition bias toward polar residues; it reads TSSNQEMTELGQATA.

The sequence is that of F-box/LRR-repeat protein At3g58940 from Arabidopsis thaliana (Mouse-ear cress).